Consider the following 454-residue polypeptide: Bifunctional protein GlmU (454 aa).

Residues 1 to 240 (MNVSVVILAA…EEEFMGVNSK (240 aa)) are pyrophosphorylase. UDP-N-acetyl-alpha-D-glucosamine contacts are provided by residues 8 to 11 (LAAG), Lys22, and 87 to 88 (GT). Mg(2+) is bound at residue Asp119. The UDP-N-acetyl-alpha-D-glucosamine site is built by Gly152, Glu166, Asn181, and Asn238. Asn238 is a binding site for Mg(2+). A linker region spans residues 241-261 (IQLACAQEIMLQRLREKAMEQ). The tract at residues 262 to 454 (GVIMNLPHTI…SDKNEEKKEQ (193 aa)) is N-acetyltransferase. Arg325 and Lys342 together coordinate UDP-N-acetyl-alpha-D-glucosamine. His353 (proton acceptor) is an active-site residue. The UDP-N-acetyl-alpha-D-glucosamine site is built by Tyr356 and Asn367. Residues Ala370, 376–377 (NY), Ser395, Ala413, and Arg430 contribute to the acetyl-CoA site.

The protein in the N-terminal section; belongs to the N-acetylglucosamine-1-phosphate uridyltransferase family. This sequence in the C-terminal section; belongs to the transferase hexapeptide repeat family. In terms of assembly, homotrimer. The cofactor is Mg(2+).

It is found in the cytoplasm. It catalyses the reaction alpha-D-glucosamine 1-phosphate + acetyl-CoA = N-acetyl-alpha-D-glucosamine 1-phosphate + CoA + H(+). The enzyme catalyses N-acetyl-alpha-D-glucosamine 1-phosphate + UTP + H(+) = UDP-N-acetyl-alpha-D-glucosamine + diphosphate. Its pathway is nucleotide-sugar biosynthesis; UDP-N-acetyl-alpha-D-glucosamine biosynthesis; N-acetyl-alpha-D-glucosamine 1-phosphate from alpha-D-glucosamine 6-phosphate (route II): step 2/2. It functions in the pathway nucleotide-sugar biosynthesis; UDP-N-acetyl-alpha-D-glucosamine biosynthesis; UDP-N-acetyl-alpha-D-glucosamine from N-acetyl-alpha-D-glucosamine 1-phosphate: step 1/1. The protein operates within bacterial outer membrane biogenesis; LPS lipid A biosynthesis. Catalyzes the last two sequential reactions in the de novo biosynthetic pathway for UDP-N-acetylglucosamine (UDP-GlcNAc). The C-terminal domain catalyzes the transfer of acetyl group from acetyl coenzyme A to glucosamine-1-phosphate (GlcN-1-P) to produce N-acetylglucosamine-1-phosphate (GlcNAc-1-P), which is converted into UDP-GlcNAc by the transfer of uridine 5-monophosphate (from uridine 5-triphosphate), a reaction catalyzed by the N-terminal domain. The chain is Bifunctional protein GlmU from Helicobacter hepaticus (strain ATCC 51449 / 3B1).